The chain runs to 1044 residues: Elongation factor 3 (1044 aa).

One copy of the HEAT 1 repeat lies at 5–42 (AQSIKVLGELFEKLSVATAENREATATEIASFLNGNII). ADP contacts are provided by Ile42 and His44. The HEAT 2 repeat unit spans residues 45–80 (DVPEEFFKNLTKAVKDKKTAAAALETIAHIANENNL). Ser83 serves as a coordination point for ADP. HEAT repeat units lie at residues 86 to 123 (PYIV…AIDP), 124 to 162 (VAIK…AAKT), 166 to 203 (LRMP…TVDN), 205 to 241 (DIER…EVTP), 242 to 279 (ATLS…LVED), and 285 to 323 (PFLE…VGNV). ADP contacts are provided by Thr392, His396, and Glu397. 2 ABC transporter domains span residues 426–641 (DEGE…YYEL) and 667–993 (VKVS…KKED). 4 residues coordinate ADP: Asn703, Glu922, Asn925, and His951. The interval 975-1044 (GHNWVSGQGS…DAYVSSDDEF (70 aa)) is disordered. Residues 987 to 999 (RLEKKEDEGDKFD) show a composition bias toward basic and acidic residues. Basic residues predominate over residues 1009–1031 (NKKKKLSSAELRKKKKERMKKKK).

Belongs to the ABC transporter superfamily. ABCF family. EF3 subfamily. In terms of assembly, monomer.

Its subcellular location is the cytoplasm. The catalysed reaction is ATP + H2O = ADP + phosphate + H(+). Its pathway is protein biosynthesis; polypeptide chain elongation. Functionally, ribosome-dependent ATPase that functions in cytoplasmic translation elongation. Required for the ATP-dependent release of deacylated tRNA from the ribosomal E-site during protein biosynthesis. Stimulates the eEF1A-dependent binding of aminoacyl-tRNA to the ribosomal A-site, which has reduced affinity for tRNA as long as the E-site is occupied. Assists translation termination by stimulating the release of nascent protein from the ribosome by release factors. In Eremothecium gossypii (strain ATCC 10895 / CBS 109.51 / FGSC 9923 / NRRL Y-1056) (Yeast), this protein is Elongation factor 3 (TEF3).